The chain runs to 443 residues: GPI mannosyltransferase 1 (443 aa).

A run of 11 helical transmembrane segments spans residues 8 to 28, 68 to 88, 90 to 110, 136 to 156, 160 to 180, 232 to 252, 273 to 291, 302 to 322, 347 to 367, 374 to 394, and 406 to 426; these read PFMV…YGAW, PLLA…FSFG, ALFA…LTLT, TRGS…WAVL, IYLG…PFIY, LTLI…LHYG, FSPY…AGAV, FESL…PLVL, SQYF…SSLL, IAVA…GYLL, and LFLA…VIVA.

It belongs to the PIGM family.

The protein resides in the endoplasmic reticulum membrane. It functions in the pathway glycolipid biosynthesis; glycosylphosphatidylinositol-anchor biosynthesis. In terms of biological role, mannosyltransferase involved in glycosylphosphatidylinositol-anchor biosynthesis. Transfers the first alpha-1,4-mannose to GlcN-acyl-PI during GPI precursor assembly. Required for cell wall integrity. The polypeptide is GPI mannosyltransferase 1 (gpi14) (Emericella nidulans (strain FGSC A4 / ATCC 38163 / CBS 112.46 / NRRL 194 / M139) (Aspergillus nidulans)).